A 613-amino-acid chain; its full sequence is Laccase 1 (613 aa).

A signal peptide spans 1–20 (MSRFARLLLIVALFFTGAWA). Plastocyanin-like domains lie at 29-142 (ITWK…IRPK) and 171-359 (YLVV…MRIP). The N-linked (GlcNAc...) asparagine glycan is linked to N74. Residues H78, H80, H122, and H124 each contribute to the Cu cation site. N256, N279, N444, N468, and N484 each carry an N-linked (GlcNAc...) asparagine glycan. The 131-residue stretch at 468-598 (NATRDTENDG…GGMGIAILDG (131 aa)) folds into the Plastocyanin-like 3 domain. The Cu cation site is built by H506, H509, and H511. An N-linked (GlcNAc...) asparagine glycan is attached at N526. Positions 580, 581, 582, and 586 each coordinate Cu cation.

It belongs to the multicopper oxidase family. Cu cation serves as cofactor.

It localises to the cell surface. It participates in pigment biosynthesis. Laccase; part of the Pks1 gene cluster that mediates the biosynthesis of an anthraquinone derivative pigment that contributes to conidial pigmentation that provides protection from UV radiation, heat and cold stress. The polyketide synthase Pks1 produces 1-acetyl-2,4,6,8-tetrahydroxy-9,10-anthraquinone though condensation of acetyl-CoA with malonyl-CoA. The dehydratase EthD and the laccase Mlac1 further convert the anthraquinone derivative into the final conidial pigment. The polypeptide is Laccase 1 (Metarhizium guizhouense (strain ARSEF 977)).